We begin with the raw amino-acid sequence, 234 residues long: Sugar fermentation stimulation protein homolog (234 aa).

Belongs to the SfsA family.

In Shewanella sp. (strain ANA-3), this protein is Sugar fermentation stimulation protein homolog.